Here is a 739-residue protein sequence, read N- to C-terminus: Disintegrin and metalloproteinase domain-containing protein 18 (739 aa).

The N-terminal stretch at 1–16 (MFLLLALLTELGRLQA) is a signal peptide. Positions 17–184 (HEGSEGIFLH…IKNLSKLLPQ (168 aa)) are excised as a propeptide. Residues Asn36, Asn76, Asn122, Asn149, Asn156, Asn177, and Asn294 are each glycosylated (N-linked (GlcNAc...) asparagine). Over 177–687 (NLSKLLPQYL…EKGYNTHWNN (511 aa)) the chain is Extracellular. The 198-residue stretch at 184-381 (QYLEIYIIVE…FETKCLQKLS (198 aa)) folds into the Peptidase M12B domain. Disulfide bonds link Cys293/Cys376, Cys335/Cys360, Cys337/Cys342, and Cys450/Cys471. N-linked (GlcNAc...) asparagine glycans are attached at residues Asn359, Asn465, Asn561, Asn611, and Asn625. A Disintegrin domain is found at 390 to 479 (QPVCGNGILE…NCVPDTYALN (90 aa)). In terms of domain architecture, EGF-like spans 620–654 (MGYNCNATTKCKGKGICNNFGNCQCFPGHRPPDCK). Disulfide bonds link Cys624/Cys636, Cys630/Cys642, and Cys644/Cys653. A helical membrane pass occupies residues 688–708 (WFILSFCIFLPFFIVFTTVIF). Over 709 to 739 (KRNEISKSCNRENAEYNRNSSVVSESDDVGH) the chain is Cytoplasmic.

The prodomain and the metalloprotease-like domain are cleaved during the epididymal maturation of the spermatozoa. As to expression, expressed specifically in testis.

It is found in the membrane. Functionally, sperm surface membrane protein that may be involved in spermatogenesis and fertilization. This is a non catalytic metalloprotease-like protein. In Homo sapiens (Human), this protein is Disintegrin and metalloproteinase domain-containing protein 18 (ADAM18).